The following is a 238-amino-acid chain: Transcription factor PCL1 (238 aa).

Residues 71–90 are compositionally biased toward low complexity; the sequence is RLRRASSSSSSSFPAFASKG. Residues 71 to 119 are disordered; sequence RLRRASSSSSSSFPAFASKGAGTGADEAESGGGADGGNGNTNNSSSKRA. Residues 100–109 are compositionally biased toward gly residues; sequence SGGGADGGNG. Positions 115–174 form a DNA-binding region, myb-like GARP; the sequence is SSKRARLVWTPQLHKRFVEVVAHLGMKNAVPKTIMQLMNVEGLTRENVASHLQKYRLYVK.

It is found in the nucleus. Its function is as follows. Transcription factor that is essential for the generation of the circadian clock oscillation. Binds to specific sites on CCA1 promoter leading to CCA1 activation. In Oryza sativa subsp. japonica (Rice), this protein is Transcription factor PCL1 (PCL1).